The primary structure comprises 144 residues: Large ribosomal subunit protein uL15 (144 aa).

The disordered stretch occupies residues 1–44 (MNLNELQPAAGSRKLRNRVGRGTSSGNGKTSGRGQKGQKARGKV). Residues 23–35 (TSSGNGKTSGRGQ) show a composition bias toward gly residues.

It belongs to the universal ribosomal protein uL15 family. In terms of assembly, part of the 50S ribosomal subunit.

Binds to the 23S rRNA. This is Large ribosomal subunit protein uL15 from Leuconostoc citreum (strain KM20).